Reading from the N-terminus, the 554-residue chain is Probable oligo-1,6-glucosidase 3 (554 aa).

Asp-199 functions as the Nucleophile in the catalytic mechanism. Catalysis depends on Glu-256, which acts as the Proton donor.

The protein belongs to the glycosyl hydrolase 13 family.

It is found in the cytoplasm. It catalyses the reaction Hydrolysis of (1-&gt;6)-alpha-D-glucosidic linkages in some oligosaccharides produced from starch and glycogen by alpha-amylase, and in isomaltose.. This chain is Probable oligo-1,6-glucosidase 3 (yugT), found in Bacillus subtilis (strain 168).